The sequence spans 82 residues: Large ribosomal subunit protein bL27c (82 aa).

The segment at 1–22 (MAHKKGAGSTKNGRDSNSKRLG) is disordered.

The protein belongs to the bacterial ribosomal protein bL27 family.

The protein localises to the plastid. Its subcellular location is the chloroplast. This chain is Large ribosomal subunit protein bL27c (rpl27), found in Chrysotila carterae (Marine alga).